A 63-amino-acid polypeptide reads, in one-letter code: UPF0370 protein ECA1289 (63 aa).

A helical membrane pass occupies residues 3–23 (WLADYWWIILIILIGMLINGI). The tract at residues 39–63 (PKLPPHRDNNDKWDNEEDDWPKKKP) is disordered.

It belongs to the UPF0370 family.

The protein localises to the cell membrane. This Pectobacterium atrosepticum (strain SCRI 1043 / ATCC BAA-672) (Erwinia carotovora subsp. atroseptica) protein is UPF0370 protein ECA1289.